The primary structure comprises 799 residues: Rho GTPase-activating protein gacI (799 aa).

Residues 226 to 451 (IKLEEVFARE…LLVEHVLTIF (226 aa)) enclose the Rho-GAP domain. The segment covering 472-520 (RSQSDISSQTKPLPSLPTSPQNRSAIITGDSSSPSLNTPPVKSSLNSSD) has biased composition (polar residues). 2 disordered regions span residues 472–572 (RSQS…PTSN) and 741–799 (EKQQ…LSNQ). Over residues 525-549 (DNGSNNNNNNNTTNTITNNGIADTA) the composition is skewed to low complexity. A compositionally biased stretch (pro residues) spans 550-568 (TPPPPTTPTAPTTPPPPTT). Low complexity-rich tracts occupy residues 743–752 (QQQQQQQQTN) and 759–791 (ISSNTNTSISGDNSENGDSLNSSTSNQSPLNSS).

It localises to the cytoplasm. In terms of biological role, rho GTPase-activating protein involved in the signal transduction pathway. The polypeptide is Rho GTPase-activating protein gacI (gacI) (Dictyostelium discoideum (Social amoeba)).